We begin with the raw amino-acid sequence, 209 residues long: Probable phosphatidylglycerophosphate synthase (209 aa).

The next 4 membrane-spanning stretches (helical) occupy residues 32-52 (ILTL…FYGG), 105-125 (ALIG…LILT), 147-167 (WGGK…VLPL), and 171-191 (LHVA…ITGV).

This sequence belongs to the CDP-alcohol phosphatidyltransferase class-I family.

It localises to the cell membrane. It carries out the reaction a CDP-1,2-diacyl-sn-glycerol + sn-glycerol 3-phosphate = a 1,2-diacyl-sn-glycero-3-phospho-(1'-sn-glycero-3'-phosphate) + CMP + H(+). It functions in the pathway lipid metabolism; phospholipid metabolism. Functionally, probably catalyzes the synthesis of phosphatidylglycerophosphate by transferring a phosphatidyl group from CDP-diacylglycerol to glycerol 3-phosphate. The polypeptide is Probable phosphatidylglycerophosphate synthase (Mycobacterium tuberculosis (strain CDC 1551 / Oshkosh)).